The chain runs to 102 residues: Small ribosomal subunit protein uS10 (102 aa).

The protein belongs to the universal ribosomal protein uS10 family. Part of the 30S ribosomal subunit.

In terms of biological role, involved in the binding of tRNA to the ribosomes. This is Small ribosomal subunit protein uS10 from Methanospirillum hungatei JF-1 (strain ATCC 27890 / DSM 864 / NBRC 100397 / JF-1).